The primary structure comprises 110 residues: UPF0251 protein PH0803 (110 aa).

The protein belongs to the UPF0251 family.

The sequence is that of UPF0251 protein PH0803 from Pyrococcus horikoshii (strain ATCC 700860 / DSM 12428 / JCM 9974 / NBRC 100139 / OT-3).